Here is a 281-residue protein sequence, read N- to C-terminus: Protoheme IX farnesyltransferase (281 aa).

The next 9 helical transmembrane spans lie at 13 to 33 (VIWL…GPLV), 38 to 58 (LIEL…FNMY), 85 to 105 (ALTF…LWLG), 107 to 127 (WVTL…TIML), 132 to 152 (WLNI…GWIM), 161 to 181 (ILLS…LAYY), 206 to 226 (IISI…QLYM), 227 to 247 (AKLI…IVTI), and 261 to 281 (MFKA…ISRI).

It belongs to the UbiA prenyltransferase family. Protoheme IX farnesyltransferase subfamily.

It is found in the cell membrane. The enzyme catalyses heme b + (2E,6E)-farnesyl diphosphate + H2O = Fe(II)-heme o + diphosphate. It participates in porphyrin-containing compound metabolism; heme O biosynthesis; heme O from protoheme: step 1/1. Its function is as follows. Converts heme B (protoheme IX) to heme O by substitution of the vinyl group on carbon 2 of heme B porphyrin ring with a hydroxyethyl farnesyl side group. This is Protoheme IX farnesyltransferase from Caldivirga maquilingensis (strain ATCC 700844 / DSM 13496 / JCM 10307 / IC-167).